Here is a 67-residue protein sequence, read N- to C-terminus: UPF0181 protein KPK_1966 (67 aa).

Positions Glu48–Asp67 are disordered. Residues Glu55–Asp67 show a composition bias toward acidic residues.

Belongs to the UPF0181 family.

The polypeptide is UPF0181 protein KPK_1966 (Klebsiella pneumoniae (strain 342)).